Here is a 469-residue protein sequence, read N- to C-terminus: Ribulose bisphosphate carboxylase large chain (469 aa).

An N6,N6,N6-trimethyllysine modification is found at K5. Residues N114 and T164 each coordinate substrate. K166 functions as the Proton acceptor in the catalytic mechanism. K168 lines the substrate pocket. Mg(2+) is bound by residues K192, D194, and E195. K192 carries the post-translational modification N6-carboxylysine. H285 functions as the Proton acceptor in the catalytic mechanism. R286, H318, and S370 together coordinate substrate.

The protein belongs to the RuBisCO large chain family. Type I subfamily. As to quaternary structure, heterohexadecamer of 8 large chains and 8 small chains; disulfide-linked. The disulfide link is formed within the large subunit homodimers. Mg(2+) serves as cofactor. In terms of processing, the disulfide bond which can form in the large chain dimeric partners within the hexadecamer appears to be associated with oxidative stress and protein turnover.

Its subcellular location is the plastid. It localises to the chloroplast. It carries out the reaction 2 (2R)-3-phosphoglycerate + 2 H(+) = D-ribulose 1,5-bisphosphate + CO2 + H2O. The enzyme catalyses D-ribulose 1,5-bisphosphate + O2 = 2-phosphoglycolate + (2R)-3-phosphoglycerate + 2 H(+). Functionally, ruBisCO catalyzes two reactions: the carboxylation of D-ribulose 1,5-bisphosphate, the primary event in carbon dioxide fixation, as well as the oxidative fragmentation of the pentose substrate in the photorespiration process. Both reactions occur simultaneously and in competition at the same active site. The sequence is that of Ribulose bisphosphate carboxylase large chain from Calycophyllum candidissimum (Degame lemonwood tree).